A 299-amino-acid polypeptide reads, in one-letter code: MSDSYSRPIIAFMSDLGTTDDSVAQCKGLMMSICQDVTVVDVCHSMEPWNVEEGARYIVDLPRFFPEGTVFATTTYPATGTTARSVAVRIKYPAKGGARGQWAGSGEGFERSEGSYIYIAPNNGLLTTVLQEHGYTEAYEVSSTDVVPARPEPTFYSREMVAIPSAHLAAGYPLEKVGRKLQDSEIVRFTPPQATVSPEGDLSGVVTAIDHPFGNIWTSIHRDNLESAGVGYGTNLKIVLDDVFPFELPLSPTFADAGEVGDPVVYVNSRGYLSLARNAASLAYPYNLKEGMSVRVTRS.

Residues Asp-15, 20–22 (DDS), Tyr-76, Ser-157, Asp-210, Asn-215, 269–270 (SR), and 277–279 (RNA) each bind S-adenosyl-L-methionine.

Belongs to the SAM hydrolase / SAM-dependent halogenase family.

It catalyses the reaction fluoride + S-adenosyl-L-methionine = 5'-deoxy-5'-fluoroadenosine + L-methionine. With respect to regulation, activity is not severely affected by most metal ions (Mg(2+), Mn(2+), Co(2+) and Fe(2+)), but both Cu(2+) and Zn(2+) are strong inhibitors. In terms of biological role, catalyzes the formation of a C-F bond by combining S-adenosyl-L-methionine (SAM) and fluoride to generate 5'-fluoro-5'-deoxyadenosine (5'-FDA) and L-methionine. The protein is Fluorinase of Actinopolyspora mzabensis.